The primary structure comprises 748 residues: SNF-related serine/threonine-protein kinase (748 aa).

Residues 16–269 enclose the Protein kinase domain; it reads YDLDKTLGRG…LEEIESHPWL (254 aa). ATP-binding positions include 22–30 and K45; that span reads LGRGHFAVV. Catalysis depends on D139, which acts as the Proton acceptor. Position 162 is a phosphoserine (S162). Position 173 is a phosphothreonine; by LKB1 (T173). The region spanning 291–334 is the UBA domain; the sequence is SEEEHNSIIQRMVLGDIADRDAIVEALETNRYNHITATYFLLAE. Phosphoserine occurs at positions 362, 390, 482, 495, and 518. The tract at residues 383-415 is disordered; that stretch reads SHATVPQSPARAGDNVLNGHRSKGLCDPAKKDE. Residues 491–503 are compositionally biased toward acidic residues; it reads EEGESDDEFDMDE. Positions 491–640 are disordered; the sequence is EEGESDDEFD…SPSPASASAA (150 aa). Over residues 522–532 the composition is skewed to basic residues; that stretch reads VHKRYHRRKSQ. A compositionally biased stretch (low complexity) spans 533–542; that stretch reads GRGSSCSSSE. The residue at position 534 (R534) is an Omega-N-methylarginine. A compositionally biased stretch (basic and acidic residues) spans 549–558; that stretch reads ESRRRLDKDS. Composition is skewed to gly residues over residues 575–592 and 600–614; these read GSEG…GGGV and QGTG…GGTP. Residue S606 is modified to Phosphoserine. The segment covering 629 to 640 has biased composition (low complexity); it reads SSSPSPASASAA.

It belongs to the protein kinase superfamily. CAMK Ser/Thr protein kinase family. Requires Mg(2+) as cofactor. In terms of processing, autophosphorylated. Phosphorylation on Thr-173 by STK11/LKB1 in complex with STE20-related adapter-alpha (STRADA) pseudo kinase and CAB39. As to expression, ubiquitously expressed in all tissues examined.

Its subcellular location is the nucleus. The catalysed reaction is L-seryl-[protein] + ATP = O-phospho-L-seryl-[protein] + ADP + H(+). It catalyses the reaction L-threonyl-[protein] + ATP = O-phospho-L-threonyl-[protein] + ADP + H(+). Its activity is regulated as follows. Activated by phosphorylation on Thr-173. Functionally, may play a role in hematopoietic cell proliferation or differentiation. Potential mediator of neuronal apoptosis. The protein is SNF-related serine/threonine-protein kinase of Mus musculus (Mouse).